Reading from the N-terminus, the 228-residue chain is Probable endo-1,4-beta-xylanase A (228 aa).

The signal sequence occupies residues 1–18 (MVSFSYLLLACSAIGALA). Asn29 carries N-linked (GlcNAc...) asparagine glycosylation. Residues 40–228 (AGTPSSTGWN…SSGSASITVY (189 aa)) form the GH11 domain. Glu124 acts as the Nucleophile in catalysis. Catalysis depends on Glu215, which acts as the Proton donor.

It belongs to the glycosyl hydrolase 11 (cellulase G) family.

It is found in the secreted. It catalyses the reaction Endohydrolysis of (1-&gt;4)-beta-D-xylosidic linkages in xylans.. The protein operates within glycan degradation; xylan degradation. Functionally, endo-1,4-beta-xylanase involved in the hydrolysis of xylan, a major structural heterogeneous polysaccharide found in plant biomass representing the second most abundant polysaccharide in the biosphere, after cellulose. In Aspergillus fumigatus (strain CBS 144.89 / FGSC A1163 / CEA10) (Neosartorya fumigata), this protein is Probable endo-1,4-beta-xylanase A (xlnA).